A 426-amino-acid polypeptide reads, in one-letter code: Glutamate-1-semialdehyde 2,1-aminomutase (426 aa).

An N6-(pyridoxal phosphate)lysine modification is found at lysine 265.

This sequence belongs to the class-III pyridoxal-phosphate-dependent aminotransferase family. HemL subfamily. As to quaternary structure, homodimer. It depends on pyridoxal 5'-phosphate as a cofactor.

It is found in the cytoplasm. It carries out the reaction (S)-4-amino-5-oxopentanoate = 5-aminolevulinate. The protein operates within porphyrin-containing compound metabolism; protoporphyrin-IX biosynthesis; 5-aminolevulinate from L-glutamyl-tRNA(Glu): step 2/2. In Salmonella schwarzengrund (strain CVM19633), this protein is Glutamate-1-semialdehyde 2,1-aminomutase.